A 171-amino-acid chain; its full sequence is Large ribosomal subunit protein uL10 (171 aa).

The protein belongs to the universal ribosomal protein uL10 family. In terms of assembly, part of the ribosomal stalk of the 50S ribosomal subunit. The N-terminus interacts with L11 and the large rRNA to form the base of the stalk. The C-terminus forms an elongated spine to which L12 dimers bind in a sequential fashion forming a multimeric L10(L12)X complex.

Forms part of the ribosomal stalk, playing a central role in the interaction of the ribosome with GTP-bound translation factors. The chain is Large ribosomal subunit protein uL10 from Paramagnetospirillum magneticum (strain ATCC 700264 / AMB-1) (Magnetospirillum magneticum).